The primary structure comprises 274 residues: 2,3,4,5-tetrahydropyridine-2,6-dicarboxylate N-succinyltransferase (274 aa).

Arg104 and Asp141 together coordinate substrate.

It belongs to the transferase hexapeptide repeat family. Homotrimer.

Its subcellular location is the cytoplasm. It carries out the reaction (S)-2,3,4,5-tetrahydrodipicolinate + succinyl-CoA + H2O = (S)-2-succinylamino-6-oxoheptanedioate + CoA. It participates in amino-acid biosynthesis; L-lysine biosynthesis via DAP pathway; LL-2,6-diaminopimelate from (S)-tetrahydrodipicolinate (succinylase route): step 1/3. This Salmonella choleraesuis (strain SC-B67) protein is 2,3,4,5-tetrahydropyridine-2,6-dicarboxylate N-succinyltransferase.